The primary structure comprises 333 residues: Protein FanF (333 aa).

The signal sequence occupies residues 1-22; that stretch reads MKNKYNLLFFLFLLCYGDVALA.

Post-translationally, three disulfide bonds are present.

It is found in the fimbrium. Its function is as follows. Minor component of K99 fimbriae. Is not required for binding of K99 fimbriae to the ganglioside receptor. May play a role in initiation, elongation and flexibility of the fimbriae. This chain is Protein FanF (fanF), found in Escherichia coli.